Here is a 294-residue protein sequence, read N- to C-terminus: Elongation factor Ts (294 aa).

The tract at residues 81–84 is involved in Mg(2+) ion dislocation from EF-Tu; that stretch reads TDFV.

The protein belongs to the EF-Ts family.

The protein resides in the cytoplasm. Associates with the EF-Tu.GDP complex and induces the exchange of GDP to GTP. It remains bound to the aminoacyl-tRNA.EF-Tu.GTP complex up to the GTP hydrolysis stage on the ribosome. In Lawsonia intracellularis (strain PHE/MN1-00), this protein is Elongation factor Ts.